The following is a 410-amino-acid chain: Elongation factor Tu, chloroplastic (410 aa).

Residues 10-214 (KPHVNIGTIG…QVDAYIPTPE (205 aa)) form the tr-type G domain. Residues 19–26 (GHVDHGKT) are G1. Residue 19-26 (GHVDHGKT) coordinates GTP. Residue Thr-26 coordinates Mg(2+). The tract at residues 60 to 64 (GITIN) is G2. A G3 region spans residues 81-84 (DCPG). GTP is bound by residues 81–85 (DCPGH) and 136–139 (NKED). A G4 region spans residues 136-139 (NKED). Residues 174-176 (SAL) are G5.

This sequence belongs to the TRAFAC class translation factor GTPase superfamily. Classic translation factor GTPase family. EF-Tu/EF-1A subfamily.

The protein resides in the plastid. It is found in the chloroplast. The enzyme catalyses GTP + H2O = GDP + phosphate + H(+). Functionally, GTP hydrolase that promotes the GTP-dependent binding of aminoacyl-tRNA to the A-site of ribosomes during protein biosynthesis. The protein is Elongation factor Tu, chloroplastic (tufA) of Chlorokybus atmophyticus (Soil alga).